We begin with the raw amino-acid sequence, 72 residues long: Protein P13 (72 aa).

The protein resides in the virion membrane. The chain is Protein P13 (P13) from Pseudomonas phage phi6 (Bacteriophage phi-6).